Here is a 187-residue protein sequence, read N- to C-terminus: Ribosome maturation factor RimM (187 aa).

In terms of domain architecture, PRC barrel spans 91-183 (DDGFYDHELE…ILVLTPPEGL (93 aa)).

It belongs to the RimM family. As to quaternary structure, binds ribosomal protein uS19.

It is found in the cytoplasm. In terms of biological role, an accessory protein needed during the final step in the assembly of 30S ribosomal subunit, possibly for assembly of the head region. Essential for efficient processing of 16S rRNA. May be needed both before and after RbfA during the maturation of 16S rRNA. It has affinity for free ribosomal 30S subunits but not for 70S ribosomes. This chain is Ribosome maturation factor RimM, found in Corynebacterium jeikeium (strain K411).